The sequence spans 371 residues: Alanine racemase (371 aa).

Lys-39 serves as the catalytic Proton acceptor; specific for D-alanine. The residue at position 39 (Lys-39) is an N6-(pyridoxal phosphate)lysine. Arg-137 serves as a coordination point for substrate. Catalysis depends on Tyr-266, which acts as the Proton acceptor; specific for L-alanine. Residue Met-314 coordinates substrate.

The protein belongs to the alanine racemase family. The cofactor is pyridoxal 5'-phosphate.

It carries out the reaction L-alanine = D-alanine. Its pathway is amino-acid biosynthesis; D-alanine biosynthesis; D-alanine from L-alanine: step 1/1. Catalyzes the interconversion of L-alanine and D-alanine. May also act on other amino acids. This chain is Alanine racemase (alr), found in Desulfovibrio desulfuricans (strain ATCC 27774 / DSM 6949 / MB).